Reading from the N-terminus, the 235-residue chain is Fms-related tyrosine kinase 3 ligand (235 aa).

The signal sequence occupies residues 1-26 (MTVLAPAWSPTTYLLLLLLLSSGLSG). Topologically, residues 27–184 (TQDCSFQHSP…EATAPTAPQP (158 aa)) are extracellular. 3 disulfide bridges follow: Cys-30/Cys-111, Cys-70/Cys-153, and Cys-119/Cys-158. 2 N-linked (GlcNAc...) asparagine glycosylation sites follow: Asn-126 and Asn-149. The helical transmembrane segment at 185–205 (PLLLLLLLPVGLLLLAAAWCL) threads the bilayer. Residues 206–235 (HWQRTRRRTPRPGEQVPPVPSPQDLLLVEH) lie on the Cytoplasmic side of the membrane. The disordered stretch occupies residues 213–235 (RTPRPGEQVPPVPSPQDLLLVEH).

As to quaternary structure, homodimer (isoform 2).

It is found in the cell membrane. The protein localises to the secreted. In terms of biological role, stimulates the proliferation of early hematopoietic cells by activating FLT3. Synergizes well with a number of other colony stimulating factors and interleukins. Required for the development of B cells, and dendritic cells (DCs). In Homo sapiens (Human), this protein is Fms-related tyrosine kinase 3 ligand (FLT3LG).